We begin with the raw amino-acid sequence, 405 residues long: Tryptophan synthase beta chain (405 aa).

The residue at position 98 (Lys98) is an N6-(pyridoxal phosphate)lysine.

The protein belongs to the TrpB family. In terms of assembly, tetramer of two alpha and two beta chains. Pyridoxal 5'-phosphate serves as cofactor.

The enzyme catalyses (1S,2R)-1-C-(indol-3-yl)glycerol 3-phosphate + L-serine = D-glyceraldehyde 3-phosphate + L-tryptophan + H2O. Its pathway is amino-acid biosynthesis; L-tryptophan biosynthesis; L-tryptophan from chorismate: step 5/5. In terms of biological role, the beta subunit is responsible for the synthesis of L-tryptophan from indole and L-serine. This is Tryptophan synthase beta chain from Xylella fastidiosa (strain M23).